Here is a 198-residue protein sequence, read N- to C-terminus: Secreted RxLR effector protein PITG_22926 (198 aa).

An N-terminal signal peptide occupies residues 1–20 (MLRSFLLIVATVSLFGQCKP). A RxLR-dEER motif is present at residues 43 to 52 (RFLRTNDEER).

Belongs to the RxLR effector family. As to quaternary structure, interacts with host MAP3Kbeta2 in the nucleoplasm.

Its subcellular location is the secreted. It is found in the host nucleus. It localises to the host nucleolus. Functionally, secreted effector that promotes P.infestans colonization of plant host. Specifically suppresses Avr4/Cf4- and AvrPto/Pto-triggered cell death. Targets the potato MAP3Kbeta2 kinase, a positive regulator of cell death associated with plant immunity, and perturbs signaling pathways triggered by MAP3Kbeta2. The chain is Secreted RxLR effector protein PITG_22926 from Phytophthora infestans (strain T30-4) (Potato late blight agent).